The primary structure comprises 178 residues: Large ribosomal subunit protein uL5 (178 aa).

Ala-2 carries the post-translational modification N-acetylalanine. Residue Lys-38 forms a Glycyl lysine isopeptide (Lys-Gly) (interchain with G-Cter in SUMO2) linkage. Residues Thr-44 and Thr-47 each carry the phosphothreonine modification. Lys-52 carries the N6-acetyllysine; alternate modification. Residue Lys-52 forms a Glycyl lysine isopeptide (Lys-Gly) (interchain with G-Cter in SUMO2); alternate linkage. Lys-85 bears the N6-acetyllysine mark. Lys-154 is covalently cross-linked (Glycyl lysine isopeptide (Lys-Gly) (interchain with G-Cter in SUMO2)).

Belongs to the universal ribosomal protein uL5 family. In terms of assembly, component of the large ribosomal subunit (LSU). Part of the 5S RNP complex, which is a LSU subcomplex composed of the 5S RNA, RPL5 and RPL11. Component of a hexameric 5S RNP precursor complex, composed of 5S RNA, RRS1, RPF2/BXDC1, RPL5, RPL11 and HEATR3; this complex acts as a precursor for ribosome assembly. Interacts with PML. Interacts with MDM2 (via its RanBP2-type zinc finger domain); negatively regulates MDM2-mediated TP53 ubiquitination and degradation. Interacts with NOP53; retains RPL11 into the nucleolus.

The protein resides in the nucleus. The protein localises to the nucleolus. It is found in the cytoplasm. Functionally, component of the ribosome, a large ribonucleoprotein complex responsible for the synthesis of proteins in the cell. The small ribosomal subunit (SSU) binds messenger RNAs (mRNAs) and translates the encoded message by selecting cognate aminoacyl-transfer RNA (tRNA) molecules. The large subunit (LSU) contains the ribosomal catalytic site termed the peptidyl transferase center (PTC), which catalyzes the formation of peptide bonds, thereby polymerizing the amino acids delivered by tRNAs into a polypeptide chain. The nascent polypeptides leave the ribosome through a tunnel in the LSU and interact with protein factors that function in enzymatic processing, targeting, and the membrane insertion of nascent chains at the exit of the ribosomal tunnel. As part of the 5S RNP/5S ribonucleoprotein particle it is an essential component of the LSU, required for its formation and the maturation of rRNAs. It also couples ribosome biogenesis to p53/TP53 activation. As part of the 5S RNP it accumulates in the nucleoplasm and inhibits MDM2, when ribosome biogenesis is perturbed, mediating the stabilization and the activation of TP53. Promotes nucleolar location of PML. This Pongo abelii (Sumatran orangutan) protein is Large ribosomal subunit protein uL5 (RPL11).